The chain runs to 118 residues: Large ribosomal subunit protein bL20 (118 aa).

This sequence belongs to the bacterial ribosomal protein bL20 family.

Its function is as follows. Binds directly to 23S ribosomal RNA and is necessary for the in vitro assembly process of the 50S ribosomal subunit. It is not involved in the protein synthesizing functions of that subunit. The sequence is that of Large ribosomal subunit protein bL20 (rplT) from Aquifex aeolicus (strain VF5).